The following is a 129-amino-acid chain: Prefoldin subunit 6 (129 aa).

A2 carries the N-acetylalanine modification. The residue at position 21 (K21) is an N6-acetyllysine. Position 66 is an N6-acetyllysine; alternate (K66). Residue K66 forms a Glycyl lysine isopeptide (Lys-Gly) (interchain with G-Cter in SUMO1); alternate linkage. Residue K66 forms a Glycyl lysine isopeptide (Lys-Gly) (interchain with G-Cter in SUMO2); alternate linkage.

Belongs to the prefoldin subunit beta family. As to quaternary structure, heterohexamer of two PFD-alpha type and four PFD-beta type subunits. Component of the PAQosome complex which is responsible for the biogenesis of several protein complexes and which consists of R2TP complex members RUVBL1, RUVBL2, RPAP3 and PIH1D1, URI complex members PFDN2, PFDN6, PDRG1, UXT and URI1 as well as ASDURF, POLR2E and DNAAF10/WDR92.

In terms of biological role, binds specifically to cytosolic chaperonin (c-CPN) and transfers target proteins to it. Binds to nascent polypeptide chain and promotes folding in an environment in which there are many competing pathways for nonnative proteins. The chain is Prefoldin subunit 6 (PFDN6) from Canis lupus familiaris (Dog).